Here is a 258-residue protein sequence, read N- to C-terminus: Cell division protein ZapD (258 aa).

This sequence belongs to the ZapD family. As to quaternary structure, interacts with FtsZ.

It is found in the cytoplasm. Cell division factor that enhances FtsZ-ring assembly. Directly interacts with FtsZ and promotes bundling of FtsZ protofilaments, with a reduction in FtsZ GTPase activity. In Coxiella burnetii (strain RSA 331 / Henzerling II), this protein is Cell division protein ZapD.